The following is a 284-amino-acid chain: MTHAIEVRGLSKSFRADRKALDDVTLQIAPGEMVALLGASGSGKSTLLRHVAGFVTGDAGSGEILVNGRTVQRNGRLARDVRRVRADIGFVFQQFNLVGRLPVITNVLVGMLTRVPKWRSLLRIFKASEVQAGLDALAQVGIDDYAFQRASTLSGGQQQRAAIARTLVQNAQVILADEPIASLDPESSRRVMSQLAQINRTRKVAVVVSLHQVDVAMRYCPRVVALRHGKVVYDGPSAALTQQMLRDLYGSEADELLHDSVPEAPSCAEGVPAPVMVRMDLAAA.

In terms of domain architecture, ABC transporter spans 5-253 (IEVRGLSKSF…MLRDLYGSEA (249 aa)). Position 38–45 (38–45 (GASGSGKS)) interacts with ATP.

The protein belongs to the ABC transporter superfamily. Phosphonates importer (TC 3.A.1.9.1) family. As to quaternary structure, the complex is composed of two ATP-binding proteins (PhnC), two transmembrane proteins (PhnE) and a solute-binding protein (PhnD).

It is found in the cell inner membrane. It catalyses the reaction phosphonate(out) + ATP + H2O = phosphonate(in) + ADP + phosphate + H(+). Part of the ABC transporter complex PhnCDE involved in phosphonates import. Responsible for energy coupling to the transport system. This chain is Phosphonates import ATP-binding protein PhnC 1, found in Cupriavidus metallidurans (strain ATCC 43123 / DSM 2839 / NBRC 102507 / CH34) (Ralstonia metallidurans).